We begin with the raw amino-acid sequence, 127 residues long: Small ribosomal subunit protein uS11 (127 aa).

Belongs to the universal ribosomal protein uS11 family. In terms of assembly, part of the 30S ribosomal subunit. Interacts with proteins S7 and S18. Binds to IF-3.

Located on the platform of the 30S subunit, it bridges several disparate RNA helices of the 16S rRNA. Forms part of the Shine-Dalgarno cleft in the 70S ribosome. This Streptococcus mutans serotype c (strain ATCC 700610 / UA159) protein is Small ribosomal subunit protein uS11.